Here is a 247-residue protein sequence, read N- to C-terminus: MNNVDELTLDLPNFTGPLDLLLHLIRSQKIDIYDIPIAKITGQYLANLARWQTLDLQIAGEYFVMASTLLRIKSQYLLPKNDFIEEDQYQEDPRTELVEQLVQYSVFQRIAEYFKKRDEEMPITVAKDPSVSPKKEIEPLPLGEITSDELANTFKVVLERFKLRKPQVGKIEVHETSIEEMTSFLKNRLQKKRSTSFFDCIKSFQDLDQVIGLFLAVLELCRDHKILVKQNRDFGDLELEKVEINGK.

Belongs to the ScpA family. As to quaternary structure, component of a cohesin-like complex composed of ScpA, ScpB and the Smc homodimer, in which ScpA and ScpB bind to the head domain of Smc. The presence of the three proteins is required for the association of the complex with DNA.

The protein resides in the cytoplasm. Its function is as follows. Participates in chromosomal partition during cell division. May act via the formation of a condensin-like complex containing Smc and ScpB that pull DNA away from mid-cell into both cell halves. The polypeptide is Segregation and condensation protein A (Lactobacillus johnsonii (strain CNCM I-12250 / La1 / NCC 533)).